An 83-amino-acid chain; its full sequence is Putative cytochrome b5 B11H24.095 (83 aa).

The Cytochrome b5 heme-binding domain occupies 2–78; that stretch reads SQTFTKSQVA…GTKLKVGTLA (77 aa). His37 and His60 together coordinate heme.

The protein belongs to the cytochrome b5 family.

This Neurospora crassa (strain ATCC 24698 / 74-OR23-1A / CBS 708.71 / DSM 1257 / FGSC 987) protein is Putative cytochrome b5 B11H24.095.